The chain runs to 222 residues: Salivary anticoagulant protein P23 (222 aa).

Residues M1 to A17 form the signal peptide. Residues N56, N73, N109, and N114 are each glycosylated (N-linked (GlcNAc...) asparagine).

In terms of tissue distribution, salivary gland (at protein level). Adult midgut.

The protein localises to the secreted. Its function is as follows. Inhibits host coagulation by delaying thrombin generation and reducing endogenous thrombin potential (ETP). This chain is Salivary anticoagulant protein P23, found in Ixodes scapularis (Black-legged tick).